Reading from the N-terminus, the 519-residue chain is Xylose import ATP-binding protein XylG (519 aa).

2 ABC transporter domains span residues 6 to 245 and 262 to 507; these read LTMR…VGRE and LEAR…LTPA. An ATP-binding site is contributed by 38–45; sequence GENGAGKS.

It belongs to the ABC transporter superfamily. Xylose importer (TC 3.A.1.2.4) family. The complex is composed of two ATP-binding proteins (XylG), two transmembrane proteins (XylH) and a solute-binding protein (XylF).

The protein localises to the cell inner membrane. It carries out the reaction D-xylose(out) + ATP + H2O = D-xylose(in) + ADP + phosphate + H(+). In terms of biological role, part of the ABC transporter complex XylFGH involved in xylose import. Responsible for energy coupling to the transport system. This chain is Xylose import ATP-binding protein XylG, found in Burkholderia ambifaria (strain ATCC BAA-244 / DSM 16087 / CCUG 44356 / LMG 19182 / AMMD) (Burkholderia cepacia (strain AMMD)).